Consider the following 465-residue polypeptide: E3 ubiquitin-protein ligase ORTHRUS-LIKE 1 (465 aa).

Positions 31–69 are disordered; it reads TSLSSPLDRSGDVDPLPVSDESGGSKADESMTDADETKK. The RING-type zinc finger occupies 109-148; that stretch reads CSLCNQLPDRPVTILCGHNFCLKCFDKWIDQGNQICATCR. The region spanning 233–374 is the YDG domain; sequence VRNQGVLVGE…FKVCRYLFVR (142 aa). A helical transmembrane segment spans residues 442–462; the sequence is MAMTCLLLFVLIILVGSSSIL.

The protein localises to the nucleus. The protein resides in the membrane. It carries out the reaction S-ubiquitinyl-[E2 ubiquitin-conjugating enzyme]-L-cysteine + [acceptor protein]-L-lysine = [E2 ubiquitin-conjugating enzyme]-L-cysteine + N(6)-ubiquitinyl-[acceptor protein]-L-lysine.. Its pathway is protein modification; protein ubiquitination. Functionally, E3 ubiquitin-protein ligase. May participate in methylation-dependent transcriptional regulation. Mediates ubiquitination with the E2 ubiquitin-conjugating enzyme UBC11. This Arabidopsis thaliana (Mouse-ear cress) protein is E3 ubiquitin-protein ligase ORTHRUS-LIKE 1 (ORTHL).